A 209-amino-acid polypeptide reads, in one-letter code: Small ribosomal subunit protein mS23 (209 aa).

This sequence belongs to the mitochondrion-specific ribosomal protein mS23 family. In terms of assembly, component of the mitochondrial small ribosomal subunit.

Its subcellular location is the mitochondrion. This chain is Small ribosomal subunit protein mS23 (rsm25), found in Sclerotinia sclerotiorum (strain ATCC 18683 / 1980 / Ss-1) (White mold).